A 311-amino-acid polypeptide reads, in one-letter code: Putative dihydroorotate dehydrogenase A (fumarate) (311 aa).

Residues Lys45, 69–73 (NSMGL), and Asn128 each bind substrate. 45-46 (KT) provides a ligand contact to FMN. Position 128 (Asn128) interacts with FMN. Catalysis depends on Cys131, which acts as the Nucleophile. The FMN site is built by Lys165 and Val193. Residue 194–195 (NS) coordinates substrate. FMN-binding positions include Gly220, 248 to 249 (GG), and 270 to 271 (GT).

Belongs to the dihydroorotate dehydrogenase family. Type 1 subfamily. As to quaternary structure, homodimer. FMN is required as a cofactor.

Its subcellular location is the cytoplasm. The enzyme catalyses (S)-dihydroorotate + fumarate = orotate + succinate. It participates in pyrimidine metabolism; UMP biosynthesis via de novo pathway. Catalyzes the conversion of dihydroorotate to orotate with fumarate as the electron acceptor. This chain is Putative dihydroorotate dehydrogenase A (fumarate) (pyrD), found in Streptococcus pyogenes serotype M3 (strain SSI-1).